The sequence spans 232 residues: Ribonuclease 3 (232 aa).

An RNase III domain is found at 5–134; it reads ENLLFDRFGL…FLGALLLDKG (130 aa). A Mg(2+)-binding site is contributed by E47. The active site involves D51. Mg(2+) contacts are provided by D120 and E123. The active site involves E123. Residues 160–229 form the DRBM domain; sequence DYKTKLQELL…AKNAFEKENH (70 aa).

Belongs to the ribonuclease III family. As to quaternary structure, homodimer. The cofactor is Mg(2+).

It is found in the cytoplasm. The enzyme catalyses Endonucleolytic cleavage to 5'-phosphomonoester.. Functionally, digests double-stranded RNA. Involved in the processing of primary rRNA transcript to yield the immediate precursors to the large and small rRNAs (23S and 16S). Processes some mRNAs, and tRNAs when they are encoded in the rRNA operon. Processes pre-crRNA and tracrRNA of type II CRISPR loci if present in the organism. This Streptococcus gordonii (strain Challis / ATCC 35105 / BCRC 15272 / CH1 / DL1 / V288) protein is Ribonuclease 3.